Reading from the N-terminus, the 151-residue chain is Large ribosomal subunit protein uL13 (151 aa).

This sequence belongs to the universal ribosomal protein uL13 family. As to quaternary structure, part of the 50S ribosomal subunit.

Its function is as follows. This protein is one of the early assembly proteins of the 50S ribosomal subunit, although it is not seen to bind rRNA by itself. It is important during the early stages of 50S assembly. This Nostoc sp. (strain PCC 7120 / SAG 25.82 / UTEX 2576) protein is Large ribosomal subunit protein uL13.